Here is a 557-residue protein sequence, read N- to C-terminus: Formate--tetrahydrofolate ligase (557 aa).

65-72 (TPAGEGKT) contacts ATP.

The protein belongs to the formate--tetrahydrofolate ligase family.

The catalysed reaction is (6S)-5,6,7,8-tetrahydrofolate + formate + ATP = (6R)-10-formyltetrahydrofolate + ADP + phosphate. It functions in the pathway one-carbon metabolism; tetrahydrofolate interconversion. In Methylococcus capsulatus (strain ATCC 33009 / NCIMB 11132 / Bath), this protein is Formate--tetrahydrofolate ligase.